Consider the following 306-residue polypeptide: D-alanine--D-alanine ligase (306 aa).

The ATP-grasp domain maps to 102–300 (KIIAANAGVC…YGDIVQWMVE (199 aa)). Residue 128–183 (PMEPPYVIKPVCEGSSFGVVIVQENEAVPPHNIGGSEWGYADEVMVEKYIPGRELT) coordinates ATP. Residues Asp-253, Glu-267, and Asn-269 each contribute to the Mg(2+) site.

Belongs to the D-alanine--D-alanine ligase family. Mg(2+) serves as cofactor. The cofactor is Mn(2+).

Its subcellular location is the cytoplasm. It catalyses the reaction 2 D-alanine + ATP = D-alanyl-D-alanine + ADP + phosphate + H(+). It functions in the pathway cell wall biogenesis; peptidoglycan biosynthesis. Cell wall formation. The sequence is that of D-alanine--D-alanine ligase from Bartonella tribocorum (strain CIP 105476 / IBS 506).